The following is a 358-amino-acid chain: MPAVLSSVLSNITDFVVHEGNGVKGLADMGLEALPKQYVQPEEERITTSTVIVDDTIPVIDLSEWGSDPKVGDMICEAAEKWGFFQIVNHGVPLEVLEEVKAATYRFFRLPAEEKNKHCKDNSPSNNVRYGTSFTPHAEKALEWKDFLSLFYVSDEEAAALWPSACRDEALTFMRNCDAVIKRLLKSLMKGLNVTEIDGTKESLLMGSKRINMNYYPKCPNPELTVGVGRHSDVSTLTILLQDQIGGLYVRKLDSDTWVHVPPINGAIVINVGDALQILSNGRYKSIEHRVIANGSNNRISVPIFVNPRPNDIIGPLPELLESGEKAVYKNVLYSDYVKHFFRKAHDGKETVDFAKIN.

In terms of domain architecture, Fe2OG dioxygenase spans 200–308 (TKESLLMGSK…RISVPIFVNP (109 aa)). A 2-oxoglutarate-binding site is contributed by tyrosine 216. Positions 231, 233, and 289 each coordinate Fe cation. Arginine 299 and serine 301 together coordinate 2-oxoglutarate.

Belongs to the iron/ascorbate-dependent oxidoreductase family. L-ascorbate is required as a cofactor. It depends on Fe(2+) as a cofactor. In terms of tissue distribution, expressed at low levels in tubers, underground stems, leaves and petioles.

The enzyme catalyses (E)-feruloyl-CoA + 2-oxoglutarate + O2 = (E)-6-hydroxyferuloyl-CoA + succinate + CO2. It functions in the pathway phenylpropanoid metabolism. In terms of biological role, 2-oxoglutarate (OG)- and Fe(II)-dependent dioxygenase (2OGD) involved in scopoletin biosynthesis. Converts feruloyl CoA into 6'-hydroxyferuloyl CoA, and, at low efficiency, caffeoyl-CoA into 6'-hydroxycaffeate, but has no activity with p-coumaroyl-CoA. This chain is Feruloyl CoA ortho-hydroxylase F6H1-2, found in Ipomoea batatas (Sweet potato).